We begin with the raw amino-acid sequence, 271 residues long: Shikimate dehydrogenase (NADP(+)) (271 aa).

Shikimate is bound by residues 14–16 (SRS) and Thr-61. Lys-65 (proton acceptor) is an active-site residue. Positions 86 and 102 each coordinate shikimate. Residues 126–130 (GAGGA), 149–154 (NRTFSR), and Met-213 each bind NADP(+). Tyr-215 serves as a coordination point for shikimate. Gly-238 contributes to the NADP(+) binding site.

The protein belongs to the shikimate dehydrogenase family. In terms of assembly, homodimer.

The enzyme catalyses shikimate + NADP(+) = 3-dehydroshikimate + NADPH + H(+). It participates in metabolic intermediate biosynthesis; chorismate biosynthesis; chorismate from D-erythrose 4-phosphate and phosphoenolpyruvate: step 4/7. Functionally, involved in the biosynthesis of the chorismate, which leads to the biosynthesis of aromatic amino acids. Catalyzes the reversible NADPH linked reduction of 3-dehydroshikimate (DHSA) to yield shikimate (SA). The protein is Shikimate dehydrogenase (NADP(+)) of Histophilus somni (strain 129Pt) (Haemophilus somnus).